A 426-amino-acid chain; its full sequence is 3-phosphoshikimate 1-carboxyvinyltransferase (426 aa).

Residues lysine 22, serine 23, and arginine 27 each contribute to the 3-phosphoshikimate site. Lysine 22 is a phosphoenolpyruvate binding site. Phosphoenolpyruvate-binding residues include glycine 96 and arginine 124. Serine 170, serine 171, glutamine 172, serine 198, aspartate 314, asparagine 337, and lysine 341 together coordinate 3-phosphoshikimate. Position 172 (glutamine 172) interacts with phosphoenolpyruvate. The active-site Proton acceptor is aspartate 314. Phosphoenolpyruvate-binding residues include arginine 345, arginine 387, and lysine 412.

It belongs to the EPSP synthase family. In terms of assembly, monomer.

It localises to the cytoplasm. The catalysed reaction is 3-phosphoshikimate + phosphoenolpyruvate = 5-O-(1-carboxyvinyl)-3-phosphoshikimate + phosphate. The protein operates within metabolic intermediate biosynthesis; chorismate biosynthesis; chorismate from D-erythrose 4-phosphate and phosphoenolpyruvate: step 6/7. Functionally, catalyzes the transfer of the enolpyruvyl moiety of phosphoenolpyruvate (PEP) to the 5-hydroxyl of shikimate-3-phosphate (S3P) to produce enolpyruvyl shikimate-3-phosphate and inorganic phosphate. The protein is 3-phosphoshikimate 1-carboxyvinyltransferase of Vibrio atlanticus (strain LGP32) (Vibrio splendidus (strain Mel32)).